The following is a 320-amino-acid chain: o-succinylbenzoate synthase (320 aa).

Lysine 133 acts as the Proton donor in catalysis. Mg(2+) contacts are provided by aspartate 161, glutamate 190, and aspartate 213. Residue lysine 235 is the Proton acceptor of the active site.

It belongs to the mandelate racemase/muconate lactonizing enzyme family. MenC type 1 subfamily. A divalent metal cation serves as cofactor.

The enzyme catalyses (1R,6R)-6-hydroxy-2-succinyl-cyclohexa-2,4-diene-1-carboxylate = 2-succinylbenzoate + H2O. The protein operates within quinol/quinone metabolism; 1,4-dihydroxy-2-naphthoate biosynthesis; 1,4-dihydroxy-2-naphthoate from chorismate: step 4/7. It participates in quinol/quinone metabolism; menaquinone biosynthesis. Its function is as follows. Converts 2-succinyl-6-hydroxy-2,4-cyclohexadiene-1-carboxylate (SHCHC) to 2-succinylbenzoate (OSB). This is o-succinylbenzoate synthase from Shigella flexneri.